Reading from the N-terminus, the 190-residue chain is Corticoliberin (190 aa).

A signal peptide spans 1–24; that stretch reads MRLRLLVSVGVLLVALLPSPPCRA. A propeptide spanning residues 25 to 147 is cleaved from the precursor; it reads LLSRGPIPGA…QEAPAARKRR (123 aa). Disordered stretches follow at residues 33 to 57 and 116 to 151; these read GARQ…QEPQ and RRPF…SQEP. The residue at position 188 (A188) is an Alanine amide.

This sequence belongs to the sauvagine/corticotropin-releasing factor/urotensin I family. In terms of assembly, interacts (via C-terminus) with CRFR1 (via N-terminal extracellular domain). In terms of tissue distribution, produced by the hypothalamus.

The protein resides in the secreted. Its function is as follows. Hormone regulating the release of corticotropin from pituitary gland. Induces NLRP6 in intestinal epithelial cells, hence may influence gut microbiota profile. The polypeptide is Corticoliberin (CRH) (Bos taurus (Bovine)).